The sequence spans 651 residues: BTB/POZ domain-containing protein At3g44820 (651 aa).

One can recognise a BTB domain in the interval 25 to 96 (SDITVVVDDV…CYGARVDITS (72 aa)). Residues 211 to 509 (DWWYEDISYL…LQVLFFEQMH (299 aa)) form the NPH3 domain. Residues 611–651 (DAKNDTVQNSVSSTPRSATADHTLPRSSRHSKHRKSFSFFG) are disordered. Polar residues predominate over residues 615 to 627 (DTVQNSVSSTPRS). The span at 637 to 651 (SSRHSKHRKSFSFFG) shows a compositional bias: basic residues.

The protein belongs to the NPH3 family.

It functions in the pathway protein modification; protein ubiquitination. May act as a substrate-specific adapter of an E3 ubiquitin-protein ligase complex (CUL3-RBX1-BTB) which mediates the ubiquitination and subsequent proteasomal degradation of target proteins. This is BTB/POZ domain-containing protein At3g44820 from Arabidopsis thaliana (Mouse-ear cress).